The following is a 576-amino-acid chain: TOX high mobility group box family member 3 (576 aa).

Disordered stretches follow at residues 189–258, 422–443, and 519–563; these read NLGG…PQKP, TMVG…QHQM, and LQHM…QIQS. Residues 204–215 show a composition bias toward low complexity; the sequence is ASKSATPSPSSS. Positions 223-239 are enriched in basic and acidic residues; sequence EANRAIGEKRAAPDSGK. A compositionally biased stretch (basic residues) spans 240–250; it reads KPKTPKKKKKK. The segment at residues 255-323 is a DNA-binding region (HMG box); it reads PQKPVSAYAL…EYLKALAAYR (69 aa). A compositionally biased stretch (low complexity) spans 428 to 443; that stretch reads PSTQVSPSVQTQQHQM. Residues 528–542 are compositionally biased toward polar residues; the sequence is PSPRQHSPVASQITS. The segment covering 549 to 563 has biased composition (low complexity); that stretch reads SPQPASQQHQSQIQS.

As to quaternary structure, homodimer. Interacts with CREB1; the interaction is not depolarization dependent. Interacts with CREBBP (via C-terminus). Interacts (via HGM box) with CITED1 (via C-terminus); the interaction increases estrogen-response element (ERE)-dependent transcription and protection against cell death. Interacts with CREB1 (phosphorylated form). Expressed mainly in epithelial cells. Expressed in the central nervous system (CNS), in the ileum and within the brain in the frontal and occipital lobe.

It is found in the nucleus. Transcriptional coactivator of the p300/CBP-mediated transcription complex. Activates transactivation through cAMP response element (CRE) sites. Protects against cell death by inducing antiapoptotic and repressing pro-apoptotic transcripts. Stimulates transcription from the estrogen-responsive or BCL-2 promoters. Required for depolarization-induced transcription activation of the C-FOS promoter in neurons. Associates with chromatin to the estrogen-responsive C3 promoter region. This chain is TOX high mobility group box family member 3 (TOX3), found in Homo sapiens (Human).